The primary structure comprises 147 residues: Hemoglobin subunit epsilon (147 aa).

Residues H3–H147 form the Globin domain. 2 positions are modified to phosphoserine: S14 and S51. H64 and H93 together coordinate heme b.

The protein belongs to the globin family. As to quaternary structure, heterotetramer of two alpha chains and two epsilon chains in early embryonic hemoglobin Gower-2; two zeta chains and two epsilon chains in early embryonic hemoglobin Gower-1. Red blood cells.

The epsilon chain is a beta-type chain of early mammalian embryonic hemoglobin. This is Hemoglobin subunit epsilon (HBE1) from Leontopithecus rosalia (Golden lion tamarin).